Reading from the N-terminus, the 432-residue chain is Probable exopolygalacturonase C (432 aa).

Positions 1–20 (MPISKGIFLSLLSTLPLALA) are cleaved as a signal peptide. 4 N-linked (GlcNAc...) asparagine glycosylation sites follow: N33, N73, N90, and N140. PbH1 repeat units follow at residues 206–227 (GTNI…AVGS) and 229–250 (SHDI…SIGS). D220 serves as the catalytic Proton donor. The active site involves H244. An N-linked (GlcNAc...) asparagine glycan is attached at N260. The PbH1 3 repeat unit spans residues 261-282 (ITNLRFEDVTVIDALYAARFKS). N292 and N302 each carry an N-linked (GlcNAc...) asparagine glycan. C377 and C383 are joined by a disulfide. The N-linked (GlcNAc...) asparagine glycan is linked to N407.

It belongs to the glycosyl hydrolase 28 family.

The protein resides in the secreted. It carries out the reaction [(1-&gt;4)-alpha-D-galacturonosyl](n) + H2O = alpha-D-galacturonate + [(1-&gt;4)-alpha-D-galacturonosyl](n-1). Functionally, specific in hydrolyzing the terminal glycosidic bond of polygalacturonic acid and oligogalacturonates. In Aspergillus terreus (strain NIH 2624 / FGSC A1156), this protein is Probable exopolygalacturonase C (pgxC).